The chain runs to 252 residues: Octanoyltransferase (252 aa).

The BPL/LPL catalytic domain maps to 56 to 237 (ADTGDEIWLV…RLIANLDGAS (182 aa)). Substrate contacts are provided by residues 96–103 (RGGQITYH), 168–170 (ALG), and 181–183 (GLS). Cysteine 199 serves as the catalytic Acyl-thioester intermediate.

The protein belongs to the LipB family.

It localises to the cytoplasm. The catalysed reaction is octanoyl-[ACP] + L-lysyl-[protein] = N(6)-octanoyl-L-lysyl-[protein] + holo-[ACP] + H(+). It functions in the pathway protein modification; protein lipoylation via endogenous pathway; protein N(6)-(lipoyl)lysine from octanoyl-[acyl-carrier-protein]: step 1/2. In terms of biological role, catalyzes the transfer of endogenously produced octanoic acid from octanoyl-acyl-carrier-protein onto the lipoyl domains of lipoate-dependent enzymes. Lipoyl-ACP can also act as a substrate although octanoyl-ACP is likely to be the physiological substrate. This chain is Octanoyltransferase, found in Burkholderia lata (strain ATCC 17760 / DSM 23089 / LMG 22485 / NCIMB 9086 / R18194 / 383).